The sequence spans 485 residues: NADH-quinone oxidoreductase subunit N (485 aa).

Transmembrane regions (helical) follow at residues 8–28, 35–55, 71–91, 105–125, 127–147, 159–179, 203–223, 235–255, 271–291, 297–317, 326–346, 373–393, 408–430, and 450–470; these read LIAL…MLSI, FLNA…LWFV, GFAM…CTFA, FYLL…ANHL, SLFL…GYAF, YTIL…LVYA, LLAG…LVPF, PAPV…GVVM, VVLA…ALSQ, LLGY…IALQ, VGVY…VVSL, AAVM…LGFI, WWLV…RVAV, and YSAG…LGVW.

The protein belongs to the complex I subunit 2 family. In terms of assembly, NDH-1 is composed of 13 different subunits. Subunits NuoA, H, J, K, L, M, N constitute the membrane sector of the complex.

The protein resides in the cell inner membrane. It carries out the reaction a quinone + NADH + 5 H(+)(in) = a quinol + NAD(+) + 4 H(+)(out). In terms of biological role, NDH-1 shuttles electrons from NADH, via FMN and iron-sulfur (Fe-S) centers, to quinones in the respiratory chain. The immediate electron acceptor for the enzyme in this species is believed to be ubiquinone. Couples the redox reaction to proton translocation (for every two electrons transferred, four hydrogen ions are translocated across the cytoplasmic membrane), and thus conserves the redox energy in a proton gradient. This chain is NADH-quinone oxidoreductase subunit N, found in Shigella boydii serotype 4 (strain Sb227).